The following is a 538-amino-acid chain: Sterile alpha motif domain-containing protein 1 (538 aa).

Residues 1–11 are compositionally biased toward pro residues; it reads MAGPPALPPPE. Disordered regions lie at residues 1–30 and 92–247; these read MAGPPALPPPETAAAATTAAAASSSAASPH and SYRN…GAAR. Positions 12 to 29 are enriched in low complexity; it reads TAAAATTAAAASSSAASP. In terms of domain architecture, SAMD1-like winged helix (WH) spans 23 to 99; the sequence is SSSAASPHYQ…SISYRNAARV (77 aa). Thr107 carries the phosphothreonine modification. The span at 115 to 125 shows a compositional bias: low complexity; that stretch reads PRGAPAAAAAA. The segment covering 126 to 139 has biased composition (pro residues); the sequence is APPPTPAPPPPPAP. The segment covering 140–158 has biased composition (low complexity); the sequence is VAAAAPARAPRAAAAAATA. Ser161 carries the phosphoserine modification. Positions 168 to 177 are enriched in low complexity; that stretch reads GPRAQRAAPL. Positions 178 to 236 are enriched in pro residues; the sequence is AAPPPAPAAPPAVAPPAGPRRAPPPAVAAREPPLPPPPQPPAPPQQQQPPPPQPQPPPE. Low complexity predominate over residues 237–247; that stretch reads GGAVRAGGAAR. Position 261 is a phosphoserine (Ser261). Residues 282–291 show a composition bias toward basic and acidic residues; sequence AARGRLERTR. The segment at 282–458 is disordered; that stretch reads AARGRLERTR…PPGRKEKPSD (177 aa). Residues 328-351 show a composition bias toward acidic residues; it reads KEEEEDDDEDEDEEDDVSEGSEVP. Positions 425 to 436 are enriched in pro residues; the sequence is SPSPVPLPPGKP. The SAM domain maps to 462–530; that stretch reads WTVMDVVEYF…KVLQQGHFED (69 aa).

Homopolymerize into a closed pentameric ring. Interacts (via SAM domain) with L3MBTL3 (via SAM domain); the interaction mediates L3MBTL3 binding to chromatin. Interacts (via WH domain) with KDM1A; the interaction modulates KDM1A function. In terms of tissue distribution, expressed in atherosclerotic lesions, not in normal intima. Expressed in foam cells.

The protein resides in the nucleus. Its subcellular location is the chromosome. It is found in the secreted. Unmethylated CpG islands (CGIs)-binding protein which localizes to H3K4me3-decorated CGIs, where it acts as a transcriptional repressor. Tethers L3MBTL3 to chromatin and interacts with the KDM1A histone demethylase complex to modulate H3K4me2 and H3K4me3 levels at CGIs. Plays a role in atherogenesis by binding with LDL on cell surface and promoting LDL oxidation which leads to the formation of foam cell. The chain is Sterile alpha motif domain-containing protein 1 from Homo sapiens (Human).